The primary structure comprises 461 residues: Putative 2,3-dihydroxypropane-1-sulfonate exporter (461 aa).

Residues 1 to 20 (MSHITTEDPATLRLPFKEKL) are Cytoplasmic-facing. A helical membrane pass occupies residues 21–41 (SYGIGDLASNILLDIGTLYLL). At 42 to 47 (KFYTDV) the chain is on the periplasmic side. Residues 48–68 (LGLPGTYGGIIFLISKFFTAF) traverse the membrane as a helical segment. The Cytoplasmic portion of the chain corresponds to 69-92 (TDMGTGIMLDSRRKIGPKGKFRPF). A helical membrane pass occupies residues 93 to 113 (ILYASFPVTLLAIANFVGTPF). Topologically, residues 114–123 (DVTGKTVMAT) are periplasmic. Residues 124–144 (ILFMLYGLFFSMMNCSYGAMV) form a helical membrane-spanning segment. Residues 145 to 162 (PAITKNPNERASLAAWRQ) lie on the Cytoplasmic side of the membrane. The chain crosses the membrane as a helical span at residues 163–183 (GGATLGLLLCTVGFVPVMNLI). Residues 184 to 188 (EGNQQ) are Periplasmic-facing. Residues 189–209 (LGYIFAATLFSLFGLLFMWIC) form a helical membrane-spanning segment. Residues 210-243 (YSGVKERYVETQPANPAQKPGLLQSFRAIAGNRP) are Cytoplasmic-facing. Residues 244–264 (LFILCIANLCTLGAFNVKLAI) form a helical membrane-spanning segment. The Periplasmic portion of the chain corresponds to 265–276 (QVYYTQYVLNDP). The chain crosses the membrane as a helical span at residues 277 to 297 (ILLSYMGFFSMGCIFIGVFLM). Residues 298–308 (PASVRRFGKKK) lie on the Cytoplasmic side of the membrane. A helical membrane pass occupies residues 309-329 (VYIGGLLIWVLGDLLNYFFGG). Position 330 (G330) is a topological domain, periplasmic. Residues 331–351 (SVSFVAFSCLAFFGSAFVNSL) form a helical membrane-spanning segment. Topologically, residues 352–387 (NWALVSDTVEYGEWRTGVRSEGTVYTGFTFFRKVSQ) are cytoplasmic. A helical transmembrane segment spans residues 388-408 (ALAGFFPGWMLTQIGYVPNVA). Over 409–419 (QADHTIEGLRQ) the chain is Periplasmic. Residues 420 to 440 (LIFIYPSALAVVTIVAMGCFY) form a helical membrane-spanning segment. Residues 441–461 (SLNEKMYVRIVEEIEARKRTA) are Cytoplasmic-facing.

The protein belongs to the sodium:galactoside symporter (TC 2.A.2) family.

It localises to the cell inner membrane. Could be involved in the export of 2,3-dihydroxypropane-1-sulfonate (DHPS). The chain is Putative 2,3-dihydroxypropane-1-sulfonate exporter (yihP) from Escherichia coli (strain K12).